We begin with the raw amino-acid sequence, 872 residues long: Alanine--tRNA ligase (872 aa).

Positions 567, 571, 669, and 673 each coordinate Zn(2+).

The protein belongs to the class-II aminoacyl-tRNA synthetase family. Zn(2+) serves as cofactor.

It localises to the cytoplasm. The enzyme catalyses tRNA(Ala) + L-alanine + ATP = L-alanyl-tRNA(Ala) + AMP + diphosphate. Its function is as follows. Catalyzes the attachment of alanine to tRNA(Ala) in a two-step reaction: alanine is first activated by ATP to form Ala-AMP and then transferred to the acceptor end of tRNA(Ala). Also edits incorrectly charged Ser-tRNA(Ala) and Gly-tRNA(Ala) via its editing domain. The sequence is that of Alanine--tRNA ligase from Streptococcus pneumoniae serotype 4 (strain ATCC BAA-334 / TIGR4).